The chain runs to 308 residues: Palmitoyltransferase ZDHHC7 (308 aa).

Over 1–50 (MQPSGHRLRDIEHHPLLTDNDNYDSASSSSSEADMADRVWFIRDGCGMVC) the chain is Cytoplasmic. Residues 51–71 (AVMTWLLVVYADFVVTFVMLL) traverse the membrane as a helical segment. Residues 72–75 (PSKD) are Lumenal-facing. Residues 76-96 (FWYSVVNGVLFNCLAVLALSS) traverse the membrane as a helical segment. At 97–173 (HLRTMLTDPG…NNCVGEKNQR (77 aa)) the chain is on the cytoplasmic side. In terms of domain architecture, DHHC spans 130 to 180 (YKCPKCCCIKPERAHHCSICKRCIRKMDHHCPWVNNCVGEKNQRFFVLFTM). The active-site S-palmitoyl cysteine intermediate is the cysteine 160. Residues 174 to 194 (FFVLFTMYIALSSIHALILCG) traverse the membrane as a helical segment. Over 195–217 (LQFISCVRGQWTECSDFSPPITV) the chain is Lumenal. The helical transmembrane segment at 218-238 (ILLVFLCLEGLLFFTFTAVMF) threads the bilayer. Over 239 to 308 (GTQIHSICND…TRKGGPEFSV (70 aa)) the chain is Cytoplasmic.

This sequence belongs to the DHHC palmitoyltransferase family. Homooligomers. Heterooligomers with ZDHHC3. In terms of processing, autopalmitoylated. Widely expressed. Present in Sertoli cells (at protein level).

It is found in the golgi apparatus membrane. It catalyses the reaction L-cysteinyl-[protein] + hexadecanoyl-CoA = S-hexadecanoyl-L-cysteinyl-[protein] + CoA. It carries out the reaction L-cysteinyl-[protein] + tetradecanoyl-CoA = S-tetradecanoyl-L-cysteinyl-[protein] + CoA. The catalysed reaction is L-cysteinyl-[protein] + octadecanoyl-CoA = S-octadecanoyl-L-cysteinyl-[protein] + CoA. Golgi-localized palmitoyltransferase that catalyzes the addition of palmitate onto various protein substrates and therefore functions in several unrelated biological processes. Has no stringent fatty acid selectivity and in addition to palmitate can also transfer onto target proteins myristate from tetradecanoyl-CoA and stearate from octadecanoyl-CoA. Palmitoylates sex steroid hormone receptors, including ESR1, PGR and AR, thereby regulating their targeting to the plasma membrane and their function in rapid intracellular signaling upon binding of sex hormones. Palmitoylates GNAQ, a heterotrimeric G protein, regulating its dynamic localization at the plasma membrane and is thereby involved in GNAQ-dependent G protein-coupled receptor signaling pathways. Also functions in ligand-induced cell death by regulating the FAS signaling pathway through the palmitoylation and stabilization of the receptor at the plasma membrane. In epithelial cells, palmitoylates SCRIB and regulates its localization to the plasma membrane, regulating indirectly cell polarity and differentiation. Also palmitoylates JAM3 and promotes its expression at tight junctions and regulates its function in cell migration. Palmitoylates the glucose transporter GLUT4/SLC2A4 and controls the insulin-dependent translocation of GLUT4 to the plasma membrane. In brain, could also palmitoylate SNAP25 and DLG4/PSD95. Could also palmitoylate DNAJC5 and regulate its localization to the Golgi membrane. Could also palmitoylate NCDN. May play a role in follicle stimulation hormone (FSH) activation of testicular Sertoli cells. Activates pyroptosis by catalyzing palmitoylation of gasdermin-D (GSDMD). This is Palmitoyltransferase ZDHHC7 from Rattus norvegicus (Rat).